The primary structure comprises 376 residues: Chaperone protein DnaJ (376 aa).

Residues aspartate 4–glycine 70 enclose the J domain. The CR-type zinc finger occupies glycine 139–glutamine 217. Residues cysteine 152, cysteine 155, cysteine 169, cysteine 172, cysteine 191, cysteine 194, cysteine 205, and cysteine 208 each coordinate Zn(2+). 4 CXXCXGXG motif repeats span residues cysteine 152–glycine 159, cysteine 169–glycine 176, cysteine 191–glycine 198, and cysteine 205–glycine 212.

It belongs to the DnaJ family. As to quaternary structure, homodimer. Zn(2+) is required as a cofactor.

Its subcellular location is the cytoplasm. Functionally, participates actively in the response to hyperosmotic and heat shock by preventing the aggregation of stress-denatured proteins and by disaggregating proteins, also in an autonomous, DnaK-independent fashion. Unfolded proteins bind initially to DnaJ; upon interaction with the DnaJ-bound protein, DnaK hydrolyzes its bound ATP, resulting in the formation of a stable complex. GrpE releases ADP from DnaK; ATP binding to DnaK triggers the release of the substrate protein, thus completing the reaction cycle. Several rounds of ATP-dependent interactions between DnaJ, DnaK and GrpE are required for fully efficient folding. Also involved, together with DnaK and GrpE, in the DNA replication of plasmids through activation of initiation proteins. In Rickettsia bellii (strain RML369-C), this protein is Chaperone protein DnaJ.